A 268-amino-acid polypeptide reads, in one-letter code: Phosphate import ATP-binding protein PstB 3 (268 aa).

In terms of domain architecture, ABC transporter spans 15–254 (LRTENLNVYY…DATESIFNNP (240 aa)). 47-54 (GPSGCGKS) lines the ATP pocket.

It belongs to the ABC transporter superfamily. Phosphate importer (TC 3.A.1.7) family. As to quaternary structure, the complex is composed of two ATP-binding proteins (PstB), two transmembrane proteins (PstC and PstA) and a solute-binding protein (PstS).

Its subcellular location is the cell inner membrane. It catalyses the reaction phosphate(out) + ATP + H2O = ADP + 2 phosphate(in) + H(+). Its function is as follows. Part of the ABC transporter complex PstSACB involved in phosphate import. Responsible for energy coupling to the transport system. This Nostoc sp. (strain PCC 7120 / SAG 25.82 / UTEX 2576) protein is Phosphate import ATP-binding protein PstB 3.